A 276-amino-acid chain; its full sequence is F-actin-capping protein subunit beta (276 aa).

Belongs to the F-actin-capping protein beta subunit family. As to quaternary structure, component of the F-actin capping complex, composed of a heterodimer of an alpha and a beta subunit. Subunit of dynactin, a multiprotein complex part of a tripartite complex with dynein and a adapter, such as BICDL1, BICD2 or HOOK3.

The protein resides in the cytoplasm. It is found in the cytoskeleton. Its function is as follows. F-actin-capping proteins bind in a Ca(2+)-independent manner to the fast growing ends of actin filaments (barbed end) thereby blocking the exchange of subunits at these ends. Unlike other capping proteins (such as gelsolin and severin), these proteins do not sever actin filaments. Forms, with CAPZB, the barbed end of the fast growing ends of actin filaments in the dynactin complex and stabilizes dynactin structure. The dynactin multiprotein complex activates the molecular motor dynein for ultra-processive transport along microtubules. The sequence is that of F-actin-capping protein subunit beta (cpb) from Drosophila melanogaster (Fruit fly).